A 130-amino-acid chain; its full sequence is Albumin-1 F (130 aa).

The first 26 residues, 1–26, serve as a signal peptide directing secretion; that stretch reads MASVKLASLIVLFATLGMFLTKNVGA. Intrachain disulfides connect cysteine 29–cysteine 46, cysteine 33–cysteine 48, and cysteine 41–cysteine 58. 2 propeptides span residues 64-69 and 123-130; these read VFLRTN and LLKSVSTA.

In terms of processing, the C-terminal glycine may be removed from PA1b.

Its function is as follows. PA1b binds to basic 7S globulin (BG) and stimulates its phosphorylation activity. Involved in the signal transduction system to regulate the growth and differentiation as a hormone peptide. Toxic to various insects through binding to a high affinity binding site in the insect gut. In Pisum sativum (Garden pea), this protein is Albumin-1 F.